Reading from the N-terminus, the 324-residue chain is Pseudouridine-5'-phosphate glycosidase (324 aa).

The active-site Proton donor is E43. Substrate is bound by residues K104 and V124. Mn(2+) is bound at residue D156. 158-160 (SAD) serves as a coordination point for substrate. The Nucleophile role is filled by K177.

This sequence belongs to the pseudouridine-5'-phosphate glycosidase family. In terms of assembly, homotrimer. Requires Mn(2+) as cofactor.

It catalyses the reaction D-ribose 5-phosphate + uracil = psi-UMP + H2O. Functionally, catalyzes the reversible cleavage of pseudouridine 5'-phosphate (PsiMP) to ribose 5-phosphate and uracil. Functions biologically in the cleavage direction, as part of a pseudouridine degradation pathway. The polypeptide is Pseudouridine-5'-phosphate glycosidase (Salinispora tropica (strain ATCC BAA-916 / DSM 44818 / JCM 13857 / NBRC 105044 / CNB-440)).